Reading from the N-terminus, the 669-residue chain is UvrABC system protein B (669 aa).

The 389-residue stretch at 26 to 414 (TNFHAGIAKQ…AGEVIELLVR (389 aa)) folds into the Helicase ATP-binding domain. 39–46 (GVTGSGKT) is an ATP binding site. A Beta-hairpin motif is present at residues 92-115 (YYDYYQPEAYVPASDTFIEKDSSI). A Helicase C-terminal domain is found at 435 to 597 (LISQINVCIK…SVVRPISDIL (163 aa)). Residues 631–666 (AAQMKVLEQQMYQHARDLEFEDAARIRDQIQRLREA) enclose the UVR domain.

It belongs to the UvrB family. Forms a heterotetramer with UvrA during the search for lesions. Interacts with UvrC in an incision complex.

It is found in the cytoplasm. Functionally, the UvrABC repair system catalyzes the recognition and processing of DNA lesions. A damage recognition complex composed of 2 UvrA and 2 UvrB subunits scans DNA for abnormalities. Upon binding of the UvrA(2)B(2) complex to a putative damaged site, the DNA wraps around one UvrB monomer. DNA wrap is dependent on ATP binding by UvrB and probably causes local melting of the DNA helix, facilitating insertion of UvrB beta-hairpin between the DNA strands. Then UvrB probes one DNA strand for the presence of a lesion. If a lesion is found the UvrA subunits dissociate and the UvrB-DNA preincision complex is formed. This complex is subsequently bound by UvrC and the second UvrB is released. If no lesion is found, the DNA wraps around the other UvrB subunit that will check the other stand for damage. This is UvrABC system protein B from Xylella fastidiosa (strain 9a5c).